The chain runs to 136 residues: Monothiol glutaredoxin-S3 (136 aa).

The Glutaredoxin domain maps to 18-135 (EREVRRAVEE…PVLKQAGALW (118 aa)). Cys-38 provides a ligand contact to [2Fe-2S] cluster. A Responsive for interaction with TGA factors motif is present at residues 133-136 (ALWL).

It belongs to the glutaredoxin family. CC-type subfamily.

The protein resides in the cytoplasm. It is found in the nucleus. Its function is as follows. May only reduce GSH-thiol disulfides, but not protein disulfides. The sequence is that of Monothiol glutaredoxin-S3 (GRXS3) from Oryza sativa subsp. japonica (Rice).